Consider the following 307-residue polypeptide: uncharacterized protein (307 aa).

This is an uncharacterized protein from Bacillus subtilis (strain 168).